The chain runs to 117 residues: Large ribosomal subunit protein bL20 (117 aa).

It belongs to the bacterial ribosomal protein bL20 family.

In terms of biological role, binds directly to 23S ribosomal RNA and is necessary for the in vitro assembly process of the 50S ribosomal subunit. It is not involved in the protein synthesizing functions of that subunit. The chain is Large ribosomal subunit protein bL20 from Ruminiclostridium cellulolyticum (strain ATCC 35319 / DSM 5812 / JCM 6584 / H10) (Clostridium cellulolyticum).